A 1149-amino-acid polypeptide reads, in one-letter code: Bone sialoprotein-binding protein (1149 aa).

A signal peptide spans 1-52; that stretch reads MINRDNKKAITKKGMISNRLNKFSIRKYTVGTASILVGTTLIFGLGNQEAKA. The segment at 53-601 is ligand binding A region; the sequence is AENTSTENAK…GDGTVKPEEK (549 aa). Disordered regions lie at residues 54–249 and 675–697; these read ENTS…TAPT and LPTK…VTVK. A compositionally biased stretch (basic and acidic residues) spans 61-75; it reads AKQDEASASDNKEVV. Over residues 77–89 the composition is skewed to polar residues; it reads ETENNSTQKNDLT. Residues 92 to 106 are compositionally biased toward basic and acidic residues; the sequence is IKKETNTDSHQEAKE. Positions 109–126 are enriched in low complexity; it reads TTSSTQQQQNNATTSTET. The segment covering 130–145 has biased composition (basic and acidic residues); sequence NIEKENVKPSTDKTAT. The span at 158–205 shows a compositional bias: polar residues; sequence PNNTNNDVTTKPSTSEIQTTPTTPQESTNIENSQPQPTPSKVDNQVTD. Positions 216–241 are enriched in basic and acidic residues; the sequence is SKEELKNNPEKLKELVRNDSNTDRST. CNA-B domains lie at 602-714, 715-824, and 825-935; these read LYKI…YKEP, KYNL…YKTP, and KYSL…EEDT. The tract at residues 896 to 1124 is disordered; sequence TQTGTNTTED…TGSENNGSNN (229 aa). Acidic residues-rich tracts occupy residues 903 to 913 and 930 to 1088; these read TEDDKDADGGE and YFEE…DSDS. The LPXTG sorting signal motif lies at 1112-1116; the sequence is LPETG. Threonine 1115 is modified (pentaglycyl murein peptidoglycan amidated threonine). A propeptide spans 1116-1149 (removed by sortase); the sequence is GSENNGSNNATLFGGLFAALGSLLLFGRRKKQNK.

Belongs to the serine-aspartate repeat-containing protein (SDr) family.

It is found in the secreted. Its subcellular location is the cell wall. Its function is as follows. Specifically interacts with bone sialoprotein (BSP), a glycoprotein of bone and dentin extracellular matrix. Could contribute to staphylococcal osteomyelitis and arthritis. This chain is Bone sialoprotein-binding protein (bbp), found in Staphylococcus aureus.